The primary structure comprises 231 residues: Probable GTP-binding protein EngB (231 aa).

The 181-residue stretch at 51-231 (DLSEIAFAGR…RAQLAALASP (181 aa)) folds into the EngB-type G domain. Residues 59–66 (GRSNVGKS), 86–90 (GRTQE), 109–112 (DLPG), 176–179 (TKAD), and 210–212 (TSS) contribute to the GTP site. Mg(2+)-binding residues include Ser-66 and Thr-88.

Belongs to the TRAFAC class TrmE-Era-EngA-EngB-Septin-like GTPase superfamily. EngB GTPase family. The cofactor is Mg(2+).

Functionally, necessary for normal cell division and for the maintenance of normal septation. The chain is Probable GTP-binding protein EngB from Rhodospirillum rubrum (strain ATCC 11170 / ATH 1.1.1 / DSM 467 / LMG 4362 / NCIMB 8255 / S1).